A 510-amino-acid polypeptide reads, in one-letter code: GMP synthase [glutamine-hydrolyzing] (510 aa).

Residues 5–195 (LVLVVDFGGQ…LFNVCNLKGD (191 aa)) form the Glutamine amidotransferase type-1 domain. Catalysis depends on cysteine 82, which acts as the Nucleophile. Active-site residues include histidine 169 and glutamate 171. A GMPS ATP-PPase domain is found at 196–385 (WSMSSFAEQQ…LGIPHKLVWR (190 aa)). 223–229 (SGGVDSS) is an ATP binding site.

Homodimer.

It catalyses the reaction XMP + L-glutamine + ATP + H2O = GMP + L-glutamate + AMP + diphosphate + 2 H(+). The protein operates within purine metabolism; GMP biosynthesis; GMP from XMP (L-Gln route): step 1/1. In terms of biological role, catalyzes the synthesis of GMP from XMP. This Clostridium botulinum (strain Kyoto / Type A2) protein is GMP synthase [glutamine-hydrolyzing].